Consider the following 317-residue polypeptide: Universal stress protein MT2052 (317 aa).

Residues G13, 128–134 (GYRGQGA), 142–143 (SV), G175, D208, 277–283 (GSHGRGG), and 291–293 (SVS) each bind ATP.

It belongs to the universal stress protein A family.

The protein is Universal stress protein MT2052 of Mycobacterium tuberculosis (strain CDC 1551 / Oshkosh).